Here is an 81-residue protein sequence, read N- to C-terminus: Mipartoxin-2 (81 aa).

A signal peptide spans 1–21 (MKTLLLTLVVVTIVCLDLGNS). Cystine bridges form between cysteine 24–cysteine 42, cysteine 35–cysteine 61, cysteine 65–cysteine 73, and cysteine 74–cysteine 79.

It belongs to the three-finger toxin family. Short-chain subfamily. As to expression, expressed by the venom gland.

It localises to the secreted. Functionally, snake venom neurotoxin that blocks neuromuscular transmission, presenting a postsynaptic action through the nicotinic acetylcholine receptor (nAChR). Has no cytotoxic activity. The protein is Mipartoxin-2 of Micrurus mipartitus (Red-tailed coral snake).